Consider the following 79-residue polypeptide: Large ribosomal subunit protein bL31c (79 aa).

Belongs to the bacterial ribosomal protein bL31 family. Type A subfamily. As to quaternary structure, part of the 50S ribosomal subunit.

The protein localises to the plastid. It is found in the chloroplast. Its function is as follows. Binds the 23S rRNA. This chain is Large ribosomal subunit protein bL31c, found in Gracilaria tenuistipitata var. liui (Red alga).